We begin with the raw amino-acid sequence, 1641 residues long: Alpha-2-macroglobulin (1641 aa).

Residues Met-1–Gly-31 form the signal peptide. Cys-32 is lipidated: N-palmitoyl cysteine. Cys-32 carries S-diacylglycerol cysteine lipidation. A cross-link (isoglutamyl cysteine thioester (Cys-Gln)) is located at residues Cys-1166–Gln-1169.

This sequence belongs to the protease inhibitor I39 (alpha-2-macroglobulin) family. Bacterial alpha-2-macroglobulin subfamily.

The protein localises to the cell membrane. Its function is as follows. Protects the bacterial cell from host peptidases. The chain is Alpha-2-macroglobulin from Xylella fastidiosa (strain Temecula1 / ATCC 700964).